A 488-amino-acid polypeptide reads, in one-letter code: Type II restriction enzyme HgaI (488 aa).

It carries out the reaction Endonucleolytic cleavage of DNA to give specific double-stranded fragments with terminal 5'-phosphates.. Its function is as follows. An S subtype restriction enzyme that recognizes the double-stranded sequences 5'-GACGC-3' and 5'-GCGTC-3' and cleaves respectively 10 bases after G-1 and 10 bases before G'-1. This chain is Type II restriction enzyme HgaI (hgaIR), found in Avibacterium volantium (Pasteurella volantium).